Here is a 318-residue protein sequence, read N- to C-terminus: S-adenosylmethionine/S-adenosylhomocysteine transporter (318 aa).

A run of 10 helical transmembrane segments spans residues 7-27 (FANL…AFIW), 44-64 (LFVT…LLLF), 76-96 (VMPI…LEFI), 105-125 (KACF…YVQL), 134-154 (LGGL…GGGE), 163-183 (LGMP…GWTL), 193-213 (SLSI…LSLA), 231-251 (LFLQ…YNLF), 262-282 (FLSF…WLLL), and 285-305 (SFPP…RLIY). The region spanning 25–148 (FIWSSSFALS…LGLVSYLVYL (124 aa)) is the EamA 1 domain. Positions 191–304 (CESLSITAIN…GFMVLGCRLI (114 aa)) constitute an EamA 2 domain.

This sequence belongs to the drug/metabolite transporter (DMT) superfamily. 10 TMS drug/metabolite exporter (DME) (TC 2.A.7.3) family.

It is found in the cell membrane. Functionally, transports S-adenosylmethionine (SAM) and S-adenosylhomocysteine (SAH). Allows bacteria to acquire SAM from the eukaryotic host cell and to likely remove the toxic by-product SAH. The chain is S-adenosylmethionine/S-adenosylhomocysteine transporter from Chlamydia muridarum (strain MoPn / Nigg).